We begin with the raw amino-acid sequence, 335 residues long: uncharacterized protein (335 aa).

Positions 21–258 (VMTSDLRKVY…QNTYHVQGQN (238 aa)) constitute an ABC transporter domain. 60-67 (GPNGAGKT) serves as a coordination point for ATP.

This sequence belongs to the ABC transporter superfamily.

This is an uncharacterized protein from Nostoc sp. (strain PCC 7120 / SAG 25.82 / UTEX 2576).